The chain runs to 756 residues: Amine oxidase [copper-containing] 2 (756 aa).

Residues 1–4 (MHLK) lie on the Cytoplasmic side of the membrane. The helical transmembrane segment at 5–25 (IVLAFLALSLITIFALAYVLL) threads the bilayer. Over 26-756 (TSPGGSSQPP…DLPPFSYHGF (731 aa)) the chain is Extracellular. 3 N-linked (GlcNAc...) asparagine glycosylation sites follow: Asn-133, Asn-198, and Asn-226. Asp-380 functions as the Proton acceptor in the catalytic mechanism. Cys-398 and Cys-424 form a disulfide bridge. The Schiff-base intermediate with substrate; via topaquinone role is filled by Tyr-465. Tyr-465 carries the post-translational modification 2',4',5'-topaquinone. 2 residues coordinate Cu(2+): His-516 and His-518. 7 residues coordinate Ca(2+): Asp-525, Leu-526, Asp-527, Glu-568, Glu-637, Phe-659, and Asn-661. Asn-662 carries N-linked (GlcNAc...) asparagine glycosylation. Positions 663, 669, and 670 each coordinate Ca(2+). Position 680 (His-680) interacts with Cu(2+). Cys-730 and Cys-737 are joined by a disulfide.

It belongs to the copper/topaquinone oxidase family. As to quaternary structure, homodimer; disulfide-linked. Probably forms heterodimers with AOC3. Cu(2+) serves as cofactor. The cofactor is Ca(2+). L-topaquinone is required as a cofactor. In terms of processing, topaquinone (TPQ) is generated by copper-dependent autoxidation of a specific tyrosyl residue. In terms of tissue distribution, expressed in many tissues including adipocytes with higher expression in retina where it is active. As to expression, not expressed in testis. Not expressed in thymus.

It localises to the cell membrane. The protein localises to the cytoplasm. The catalysed reaction is 2-phenylethylamine + O2 + H2O = 2-phenylacetaldehyde + H2O2 + NH4(+). The enzyme catalyses tryptamine + O2 + H2O = indole-3-acetaldehyde + H2O2 + NH4(+). It carries out the reaction tyramine + O2 + H2O = (4-hydroxyphenyl)acetaldehyde + H2O2 + NH4(+). In terms of biological role, catalyzes the oxidative deamination of primary amines to the corresponding aldehydes with the concomitant production of hydrogen peroxide and ammonia. Has a preference for 2-phenylethylamine, tryptamine and tyramine. Could also act on methylamine and benzylamine but much less efficiently. The chain is Amine oxidase [copper-containing] 2 from Homo sapiens (Human).